The primary structure comprises 515 residues: MDEFHRYGKEDSSWQQCFLYPLFFQEDLYAISHDHYLDGSSSSEPMEHLSSNDQFSFLTVKRLIGQIRQQNHSIVLFVNCDPNPLVDRKKSSYSESVLEGLTLVLEVPFSIRSKYSVEGMNEWKSFRSIHSIFPFLEDKFPHSNYVSDTRIPYSIHPEILVRTFRRWIGDAPSLHPLRSILYEYRNSSESLQRSIIVVPKVNTRFFLFLWNNYVYECESILVSLLKRSSHSRSLSHGSFPQRTHFHRKIKNIFLFSRRNSFQSIWSLKDPNIHYVRYGERSIIAIKGTNLLVKKYRYYLPIFRQCYFHLWNEPYRVCSHQLSKNCSSSLGYFLRFRMKPLLVKTKMLDELFIADLITDEFDPIVPIVPIIGLLSREKFCDISGRPISKLSWTSLTDDDILDRFDRIWRNLFHYYSGSFGRDGLYRIKYILSLSCAKTLACKHKSTIRVVRKELGPELFKKSFSKERELDSPPFSSKAAARSQRERIWHSDIPQINPLAHSWQKIQDLKIENLFDQ.

The protein belongs to the intron maturase 2 family. MatK subfamily.

Its subcellular location is the plastid. It is found in the chloroplast. In terms of biological role, usually encoded in the trnK tRNA gene intron. Probably assists in splicing its own and other chloroplast group II introns. The sequence is that of Maturase K from Picea engelmannii (Engelmann's spruce).